The sequence spans 218 residues: Protein-L-isoaspartate O-methyltransferase (218 aa).

The active site involves Ser52.

Belongs to the methyltransferase superfamily. L-isoaspartyl/D-aspartyl protein methyltransferase family.

It localises to the cytoplasm. The catalysed reaction is [protein]-L-isoaspartate + S-adenosyl-L-methionine = [protein]-L-isoaspartate alpha-methyl ester + S-adenosyl-L-homocysteine. In terms of biological role, catalyzes the methyl esterification of L-isoaspartyl residues in peptides and proteins that result from spontaneous decomposition of normal L-aspartyl and L-asparaginyl residues. It plays a role in the repair and/or degradation of damaged proteins. The chain is Protein-L-isoaspartate O-methyltransferase from Rhodopseudomonas palustris (strain ATCC BAA-98 / CGA009).